The primary structure comprises 370 residues: Cytochrome b (370 aa).

The next 4 helical transmembrane spans lie at 30–50 (FGSMLGMVLVFQIVTGTFLAF), 74–96 (WIFRIFHFNGASLFFIFLYLHIF), 109–129 (VWMSGLTIYLLVMMEAFMGYV), and 175–195 (FFVLHFLLPWAILFIVLGHLI). 2 residues coordinate heme b: His-80 and His-94. Residues His-179 and His-193 each coordinate heme b. A ubiquinone is bound at residue His-198. The next 4 helical transmembrane spans lie at 221–240 (YIGKDAYNIVVWLVFIVLSL), 284–304 (VLGVIALLMSIVTFYFFALVN), 316–336 (FLVFLFIISSVILSWLGQCMV), and 342–362 (VLSPLFSVIYFGLAYLLLGIF).

The protein belongs to the cytochrome b family. In terms of assembly, the main subunits of complex b-c1 are: cytochrome b, cytochrome c1 and the Rieske protein. Heme b serves as cofactor.

It localises to the mitochondrion inner membrane. Its function is as follows. Component of the ubiquinol-cytochrome c reductase complex (complex III or cytochrome b-c1 complex) that is part of the mitochondrial respiratory chain. The b-c1 complex mediates electron transfer from ubiquinol to cytochrome c. Contributes to the generation of a proton gradient across the mitochondrial membrane that is then used for ATP synthesis. This is Cytochrome b (ctb-1) from Caenorhabditis briggsae.